Reading from the N-terminus, the 89-residue chain is MATVIAKIKAMPTSPEINKETLKESLKELVEKFGAKCRGVIDEPLAFGLYSVFIMVEMEEQEGGMDPIEEAMNALDDVESAEVVELSLV.

The protein belongs to the EF-1-beta/EF-1-delta family.

In terms of biological role, promotes the exchange of GDP for GTP in EF-1-alpha/GDP, thus allowing the regeneration of EF-1-alpha/GTP that could then be used to form the ternary complex EF-1-alpha/GTP/AAtRNA. This is Elongation factor 1-beta from Methanococcus vannielii (strain ATCC 35089 / DSM 1224 / JCM 13029 / OCM 148 / SB).